The chain runs to 274 residues: Lectizyme (274 aa).

The N-terminal stretch at Met-1–Ala-16 is a signal peptide. The Peptidase S1 domain maps to Ile-32–Glu-268. An intrachain disulfide couples Cys-57 to Cys-73. Catalysis depends on charge relay system residues His-72 and Asp-119. 2 disulfide bridges follow: Cys-188–Cys-204 and Cys-215–Cys-244. The active-site Charge relay system is Ser-219.

This sequence belongs to the peptidase S1 family. Expressed in the midgut.

The protein resides in the secreted. In terms of biological role, protein with lectin and protease activity involved in the establishment of trypanosome infections in tsetse flies. Binds D-glucosamine and agglutinates bloodstream-form trypanosomes and rabbit red blood cells. Capable of inducing transformation of bloodstream-form trypanosomes into procyclic (midgut) forms in vitro. In Glossina austeni (Savannah tsetse fly), this protein is Lectizyme (Gpl).